A 416-amino-acid chain; its full sequence is Putative nucleoside permease NupX (416 aa).

The Periplasmic portion of the chain corresponds to 1 to 2 (MD). A helical membrane pass occupies residues 3–23 (VMRSVLGMVVLLTIAFLLSVN). Topologically, residues 24–31 (KKKISLRT) are cytoplasmic. A helical membrane pass occupies residues 32 to 52 (VGAALVLQVVIGGIMLWLPPG). Residues 53–95 (RWVAEKVAFGVHKVMAYSDAGSAFIFGSLVGPKMDTLFDGAGF) are Periplasmic-facing. Residues 96–118 (IFGFRVLPAIIFVTALVSILYYI) form a helical membrane-spanning segment. At 119–172 (GVMGILIRILGGIFQKALNISKIESFVAVTTIFLGQNEIPAIVKPFIDRLNRNE) the chain is on the cytoplasmic side. Residues 173 to 193 (LFTAICSGMASIAGSTMIGYA) traverse the membrane as a helical segment. The Periplasmic portion of the chain corresponds to 194 to 196 (ALG). The helical transmembrane segment at 197 to 217 (VPVEYLLAASLMAIPGGILFA) threads the bilayer. Residues 218 to 246 (RLLSPATESSQVSFNNLSFTETPPKSIIE) are Cytoplasmic-facing. The chain crosses the membrane as a helical span at residues 247-267 (AAATGAMTGLKIAAGVATVVM). Residues 268 to 352 (AFVAIIALIN…QTAGTLDAKT (85 aa)) lie on the Periplasmic side of the membrane. The chain crosses the membrane as a helical span at residues 353–373 (VAIISFALCGFANFGSIGVVV). Residues 374 to 394 (GAFSAVAPHRAPEIAQLGLRA) are Cytoplasmic-facing. Residues 395-415 (LAAATLSNLMSATIAGFFIGL) traverse the membrane as a helical segment. Position 416 (Ala-416) is a topological domain, periplasmic.

This sequence belongs to the concentrative nucleoside transporter (CNT) (TC 2.A.41) family.

The protein localises to the cell inner membrane. This Escherichia coli (strain K12) protein is Putative nucleoside permease NupX (nupX).